Reading from the N-terminus, the 309-residue chain is Protein MAK16 homolog (309 aa).

The interval glutamate 194–asparagine 309 is disordered. 2 stretches are compositionally biased toward acidic residues: residues alanine 195–aspartate 227 and valine 235–glutamate 270. Over residues isoleucine 275 to arginine 293 the composition is skewed to basic residues. The span at glutamate 299 to asparagine 309 shows a compositional bias: acidic residues.

The protein belongs to the MAK16 family.

Its subcellular location is the nucleus. The protein localises to the nucleolus. In Dictyostelium discoideum (Social amoeba), this protein is Protein MAK16 homolog (mak16l).